We begin with the raw amino-acid sequence, 854 residues long: DNA topoisomerase 1 type prokaryotic (854 aa).

In terms of domain architecture, Toprim spans 2–110 (SILILLESPG…KRLRFNAITK (109 aa)). 2 residues coordinate Mg(2+): glutamate 8 and aspartate 79. Residues 124–610 (DKNLVDAQKA…DFYDKLKPIV (487 aa)) form the Topo IA-type catalytic domain. Residues 158–163 (SAGRVQ) form an interaction with DNA region. Tyrosine 302 serves as the catalytic O-(5'-phospho-DNA)-tyrosine intermediate. Residues 802-854 (KSAPKGGSKTIRKPSQTKYSQTKSTKSTKSTKSTNKKFVGKSAKKTTKKTTKK) form a disordered region. The segment covering 814–834 (KPSQTKYSQTKSTKSTKSTKS) has biased composition (low complexity). A compositionally biased stretch (basic residues) spans 835–854 (TNKKFVGKSAKKTTKKTTKK).

Belongs to the type IA topoisomerase family. Mg(2+) serves as cofactor.

The protein localises to the virion. It catalyses the reaction ATP-independent breakage of single-stranded DNA, followed by passage and rejoining.. In terms of biological role, releases the supercoiling and torsional tension of DNA, which is introduced during the DNA replication and transcription, by transiently cleaving and rejoining one strand of the DNA duplex. Introduces a single-strand break via transesterification at a target site in duplex DNA. The scissile phosphodiester is attacked by the catalytic tyrosine of the enzyme, resulting in the formation of a DNA-(5'-phosphotyrosyl)-enzyme intermediate and the expulsion of a 3'-OH DNA strand. The free DNA strand then undergoes passage around the unbroken strand, thus removing DNA supercoils. Finally, in the religation step, the DNA 3'-OH attacks the covalent intermediate to expel the active-site tyrosine and restore the DNA phosphodiester backbone. The chain is DNA topoisomerase 1 type prokaryotic (TOP1P) from Acanthamoeba polyphaga (Amoeba).